A 401-amino-acid polypeptide reads, in one-letter code: Chorismate synthase (401 aa).

NADP(+) contacts are provided by arginine 40 and arginine 46. Residues 135–137 (RAS), 256–257 (QA), glycine 300, 315–319 (KPIST), and arginine 341 each bind FMN.

The protein belongs to the chorismate synthase family. As to quaternary structure, homotetramer. FMNH2 serves as cofactor.

It catalyses the reaction 5-O-(1-carboxyvinyl)-3-phosphoshikimate = chorismate + phosphate. It functions in the pathway metabolic intermediate biosynthesis; chorismate biosynthesis; chorismate from D-erythrose 4-phosphate and phosphoenolpyruvate: step 7/7. Catalyzes the anti-1,4-elimination of the C-3 phosphate and the C-6 proR hydrogen from 5-enolpyruvylshikimate-3-phosphate (EPSP) to yield chorismate, which is the branch point compound that serves as the starting substrate for the three terminal pathways of aromatic amino acid biosynthesis. This reaction introduces a second double bond into the aromatic ring system. This is Chorismate synthase from Mycobacterium avium (strain 104).